Consider the following 290-residue polypeptide: Lysine export transcriptional regulatory protein LysG (290 aa).

An HTH lysR-type domain is found at 1–57 (MNPIQLDTLLSIIDEGSFEGASLALSISPSAVSQRVKALEHHVGRVLVSRTQPAKAT). A DNA-binding region (H-T-H motif) is located at residues 18–37 (FEGASLALSISPSAVSQRVK).

This sequence belongs to the LysR transcriptional regulatory family.

Its function is as follows. Positively regulates the expression of the exporter LysE. Induction requires the presence of a coinducer, which is either intracellular L-lysine, L-arginine or L-citrulline. L-histidine also acts as a coinducer of lysE expression, but this amino acid is not exported by LysE. The lysEG system prevents bacteriostasis due to elevated L-lysine or L-arginine concentrations that arise during growth in the presence of peptides or in mutants possessing a deregulated biosynthesis pathway. The protein is Lysine export transcriptional regulatory protein LysG of Corynebacterium glutamicum (strain ATCC 13032 / DSM 20300 / JCM 1318 / BCRC 11384 / CCUG 27702 / LMG 3730 / NBRC 12168 / NCIMB 10025 / NRRL B-2784 / 534).